The following is a 356-amino-acid chain: Cysteine protease XCP2 (356 aa).

Residues 1–26 (MALSSPSRILCFALALSAASLSLSFA) form the signal peptide. Residues 27-137 (SSHDYSIVGY…AEFAYRDVEA (111 aa)) constitute a propeptide, activation peptide. 3 disulfides stabilise this stretch: cysteine 159-cysteine 201, cysteine 193-cysteine 234, and cysteine 292-cysteine 343. The active site involves cysteine 162. Asparagine 181 carries an N-linked (GlcNAc...) asparagine glycan. Active-site residues include histidine 298 and asparagine 318.

Belongs to the peptidase C1 family. As to quaternary structure, interacts with PRN2. Mostly expressed in roots, stems and flowers. Confined to tracheary elements, and specifically to xylem.

The protein localises to the vacuole. The protein resides in the cell membrane. In terms of biological role, cysteine protease involved in xylem tracheary element (TE) autolysis during xylogenesis in roots. Participates in micro autolysis within the intact central vacuole before mega autolysis is initiated by tonoplast implosion. Involved in susceptibility to the bacterial plant pathogen Ralstonia solanacearum. This chain is Cysteine protease XCP2, found in Arabidopsis thaliana (Mouse-ear cress).